The primary structure comprises 73 residues: Putative defensin-like protein 277 (73 aa).

The N-terminal stretch at 1 to 24 is a signal peptide; sequence MSAQKIYLASLLLFICLVFPQSTA. Intrachain disulfides connect Cys27/Cys64, Cys33/Cys52, Cys39/Cys62, and Cys43/Cys63.

Belongs to the DEFL family.

It is found in the secreted. The polypeptide is Putative defensin-like protein 277 (Arabidopsis thaliana (Mouse-ear cress)).